The sequence spans 123 residues: Small ribosomal subunit protein uS13 (123 aa).

The tract at residues 93–123 is disordered; the sequence is RRNLPVRGQKTKTNARTRKGPKRAIGGKKKK.

Belongs to the universal ribosomal protein uS13 family. In terms of assembly, part of the 30S ribosomal subunit. Forms a loose heterodimer with protein S19. Forms two bridges to the 50S subunit in the 70S ribosome.

In terms of biological role, located at the top of the head of the 30S subunit, it contacts several helices of the 16S rRNA. In the 70S ribosome it contacts the 23S rRNA (bridge B1a) and protein L5 of the 50S subunit (bridge B1b), connecting the 2 subunits; these bridges are implicated in subunit movement. Contacts the tRNAs in the A and P-sites. This is Small ribosomal subunit protein uS13 from Clostridium botulinum (strain Loch Maree / Type A3).